The following is a 193-amino-acid chain: Putative protein-glutamate methylesterase/protein-glutamine glutaminase (193 aa).

The CheB-type methylesterase domain occupies 1-179 (MNYEAIVIGV…DYVLSLEKIA (179 aa)). Catalysis depends on residues Ser-11, His-38, and Asp-131.

Belongs to the CheB family.

Its subcellular location is the cytoplasm. The enzyme catalyses [protein]-L-glutamate 5-O-methyl ester + H2O = L-glutamyl-[protein] + methanol + H(+). It catalyses the reaction L-glutaminyl-[protein] + H2O = L-glutamyl-[protein] + NH4(+). Its function is as follows. May be involved in chemotaxis. This chain is Putative protein-glutamate methylesterase/protein-glutamine glutaminase (cheB2), found in Leptospira interrogans serogroup Icterohaemorrhagiae serovar copenhageni (strain Fiocruz L1-130).